The chain runs to 298 residues: MTCNLLVILGPTASGKTRLGVAAARALDGEIISADSRQVFRGMDIGTGKDLSEYGDVPYHLIDICEAGSEFSVFDFQERFCTAYADIRKRGRLPVLVGGTGLYLDCVLRNYRLVKVPENPVLRAELDPLSMDQLAERLRALKPEQHNTTDLGHRERLLRAIEIAEGEKACGETGPVLPGLRPLVFGVRWERAVLRRRITARLKERLDAGLIDEVQALLDAGVAHRMLEHYGLEYRLVSQHLRGELNRNDMFQKLNSAIHQFAKRQDTWFRRMERQGVQIHWLDGAGDPLQGLLRVFMS.

Glycine 10 to threonine 17 provides a ligand contact to ATP. A substrate-binding site is contributed by threonine 12–threonine 17. The tract at residues aspartate 35 to glutamine 38 is interaction with substrate tRNA.

Belongs to the IPP transferase family. In terms of assembly, monomer. Requires Mg(2+) as cofactor.

The enzyme catalyses adenosine(37) in tRNA + dimethylallyl diphosphate = N(6)-dimethylallyladenosine(37) in tRNA + diphosphate. Its function is as follows. Catalyzes the transfer of a dimethylallyl group onto the adenine at position 37 in tRNAs that read codons beginning with uridine, leading to the formation of N6-(dimethylallyl)adenosine (i(6)A). This Syntrophotalea carbinolica (strain DSM 2380 / NBRC 103641 / GraBd1) (Pelobacter carbinolicus) protein is tRNA dimethylallyltransferase 2.